A 293-amino-acid polypeptide reads, in one-letter code: Bifunctional protein FolD (293 aa).

Residues 164 to 166, S193, and T234 each bind NADP(+); that span reads GRS.

The protein belongs to the tetrahydrofolate dehydrogenase/cyclohydrolase family. Homodimer.

The enzyme catalyses (6R)-5,10-methylene-5,6,7,8-tetrahydrofolate + NADP(+) = (6R)-5,10-methenyltetrahydrofolate + NADPH. It catalyses the reaction (6R)-5,10-methenyltetrahydrofolate + H2O = (6R)-10-formyltetrahydrofolate + H(+). The protein operates within one-carbon metabolism; tetrahydrofolate interconversion. Functionally, catalyzes the oxidation of 5,10-methylenetetrahydrofolate to 5,10-methenyltetrahydrofolate and then the hydrolysis of 5,10-methenyltetrahydrofolate to 10-formyltetrahydrofolate. The chain is Bifunctional protein FolD from Phocaeicola vulgatus (strain ATCC 8482 / DSM 1447 / JCM 5826 / CCUG 4940 / NBRC 14291 / NCTC 11154) (Bacteroides vulgatus).